The chain runs to 229 residues: Uracil-DNA glycosylase (229 aa).

Residue aspartate 64 is the Proton acceptor of the active site.

Belongs to the uracil-DNA glycosylase (UDG) superfamily. UNG family.

The protein localises to the cytoplasm. The catalysed reaction is Hydrolyzes single-stranded DNA or mismatched double-stranded DNA and polynucleotides, releasing free uracil.. In terms of biological role, excises uracil residues from the DNA which can arise as a result of misincorporation of dUMP residues by DNA polymerase or due to deamination of cytosine. The protein is Uracil-DNA glycosylase of Klebsiella pneumoniae subsp. pneumoniae (strain ATCC 700721 / MGH 78578).